We begin with the raw amino-acid sequence, 1005 residues long: Regulator of telomere elongation helicase 1 homolog (1005 aa).

One can recognise a Helicase ATP-binding domain in the interval 7-322 (AGIPVHFPFE…KEMLLELEKA (316 aa)). 42 to 49 (SPTGTGKT) serves as a coordination point for ATP. Residues C145, C163, C172, and C208 each contribute to the [4Fe-4S] cluster site. Positions 251 to 254 (DEAH) match the DEAH box motif. T876 carries the post-translational modification Phosphothreonine. The interval 893–917 (NGPLKTEPSEPATTSSSFCPTPAQS) is disordered.

This sequence belongs to the helicase family. RAD3/XPD subfamily.

It is found in the nucleus. It catalyses the reaction ATP + H2O = ADP + phosphate + H(+). A probable ATP-dependent DNA helicase implicated in DNA repair and the maintenance of genomic stability. Acts as an anti-recombinase to counteract toxic recombination and limit crossover during meiosis. Regulates meiotic recombination and crossover homeostasis by physically dissociating strand invasion events and thereby promotes noncrossover repair by meiotic synthesis dependent strand annealing (SDSA) as well as disassembly of D loop recombination intermediates. The sequence is that of Regulator of telomere elongation helicase 1 homolog from Drosophila virilis (Fruit fly).